The chain runs to 115 residues: Nitrogenase-stabilizing/protective protein NifW (115 aa).

The protein belongs to the NifW family. Homotrimer; associates with NifD.

In terms of biological role, may protect the nitrogenase Fe-Mo protein from oxidative damage. The protein is Nitrogenase-stabilizing/protective protein NifW of Azotobacter vinelandii (strain DJ / ATCC BAA-1303).